Here is a 206-residue protein sequence, read N- to C-terminus: Type III pantothenate kinase (206 aa).

An ATP-binding site is contributed by 5-12; the sequence is DIGNTFLH. Substrate-binding positions include Y69 and 73–76; that span reads GVDR. D75 acts as the Proton acceptor in catalysis. D90 is a binding site for K(+). S93 serves as a coordination point for ATP. T145 contributes to the substrate binding site.

The protein belongs to the type III pantothenate kinase family. As to quaternary structure, homodimer. NH4(+) serves as cofactor. Requires K(+) as cofactor.

It localises to the cytoplasm. It catalyses the reaction (R)-pantothenate + ATP = (R)-4'-phosphopantothenate + ADP + H(+). It participates in cofactor biosynthesis; coenzyme A biosynthesis; CoA from (R)-pantothenate: step 1/5. Functionally, catalyzes the phosphorylation of pantothenate (Pan), the first step in CoA biosynthesis. In Helicobacter hepaticus (strain ATCC 51449 / 3B1), this protein is Type III pantothenate kinase.